The following is a 3013-amino-acid chain: Protein furry homolog-like (3013 aa).

Residue Ser-2 is modified to N-acetylserine. Residues 90 to 109 form a disordered region; it reads DESYEYRPRSSTKSKGDEQQ. Ser-844 is modified (phosphoserine). 2 disordered regions span residues 878–897 and 1476–1498; these read SSST…LAST and VTSG…PDNK. The span at 1476–1486 shows a compositional bias: low complexity; the sequence is VTSGTTSSSNT. A phosphoserine mark is found at Ser-1914, Ser-1935, Ser-1941, Ser-1945, and Ser-1957. The residue at position 1959 (Thr-1959) is a Phosphothreonine. Phosphoserine is present on residues Ser-1978, Ser-2272, and Ser-2454. Positions 2459-2492 are disordered; that stretch reads DKGDTPSLQEYQCSSSTPSLNLTNQEDTDESSEE. The span at 2464-2483 shows a compositional bias: polar residues; the sequence is PSLQEYQCSSSTPSLNLTNQ. Ser-2499 bears the Phosphoserine mark. Disordered regions lie at residues 2508–2567 and 2636–2660; these read LNSD…DTTS and EEEA…EVQT. 2 stretches are compositionally biased toward polar residues: residues 2528–2539 and 2555–2567; these read SEDSTGSITTEE and DNAN…DTTS.

This sequence belongs to the furry protein family. As to expression, widely expressed with higher expression in colon, placenta, brain and cells of lymphoid origin.

Functionally, plays a key role in maintaining the integrity of polarized cell extensions during morphogenesis, regulates the actin cytoskeleton and plays a key role in patterning sensory neuron dendritic fields by promoting avoidance between homologous dendrites as well as by limiting dendritic branching. May function as a transcriptional activator. The sequence is that of Protein furry homolog-like (FRYL) from Homo sapiens (Human).